The following is a 98-amino-acid chain: NADH-ubiquinone oxidoreductase chain 4L (98 aa).

3 helical membrane-spanning segments follow: residues 1–21, 26–46, and 59–79; these read MTLVHMNLLLAFAMSLTGLLM, LMSALLCLEGMVLSLFILATI, and MPIILLVFAACEAAIGLALLV.

Belongs to the complex I subunit 4L family. In terms of assembly, core subunit of respiratory chain NADH dehydrogenase (Complex I) which is composed of 45 different subunits.

It is found in the mitochondrion inner membrane. The catalysed reaction is a ubiquinone + NADH + 5 H(+)(in) = a ubiquinol + NAD(+) + 4 H(+)(out). Core subunit of the mitochondrial membrane respiratory chain NADH dehydrogenase (Complex I) which catalyzes electron transfer from NADH through the respiratory chain, using ubiquinone as an electron acceptor. Part of the enzyme membrane arm which is embedded in the lipid bilayer and involved in proton translocation. In Pontoporia blainvillei (Franciscana), this protein is NADH-ubiquinone oxidoreductase chain 4L (MT-ND4L).